We begin with the raw amino-acid sequence, 209 residues long: tRNA (guanine-N(7)-)-methyltransferase (209 aa).

S-adenosyl-L-methionine-binding residues include D35, E60, N87, and D113. Residue D113 is part of the active site. 2 residues coordinate substrate: K117 and D149.

The protein belongs to the class I-like SAM-binding methyltransferase superfamily. TrmB family.

It catalyses the reaction guanosine(46) in tRNA + S-adenosyl-L-methionine = N(7)-methylguanosine(46) in tRNA + S-adenosyl-L-homocysteine. It participates in tRNA modification; N(7)-methylguanine-tRNA biosynthesis. Functionally, catalyzes the formation of N(7)-methylguanine at position 46 (m7G46) in tRNA. This chain is tRNA (guanine-N(7)-)-methyltransferase, found in Prochlorococcus marinus (strain AS9601).